The chain runs to 181 residues: Acetolactate synthase small subunit (181 aa).

The 75-residue stretch at 4 to 78 (TLSVLVEDES…NVLKIQDITN (75 aa)) folds into the ACT domain.

This sequence belongs to the acetolactate synthase small subunit family. Dimer of large and small chains.

The protein resides in the plastid. The protein localises to the chloroplast. It catalyses the reaction 2 pyruvate + H(+) = (2S)-2-acetolactate + CO2. It participates in amino-acid biosynthesis; L-isoleucine biosynthesis; L-isoleucine from 2-oxobutanoate: step 1/4. It functions in the pathway amino-acid biosynthesis; L-valine biosynthesis; L-valine from pyruvate: step 1/4. The protein is Acetolactate synthase small subunit (ilvH) of Galdieria sulphuraria (Red alga).